Here is a 476-residue protein sequence, read N- to C-terminus: MKVTLPDFRRAGVLVVGDVMLDRYWYGPTSRISPEAPVPVVKVDTIEERPGGAANVAMNIASLGAVARLVGLTGIDDAARALICKLSEVRVRCDFVSVPTHPTITKLRVLSRNQQLIRLDFEEGFDGVDPTPIFERIQLALPQIGALVLSDYAKGALNSVQPMIQLARKANVPVLIDPKGSDFERYRGATLLTPNLSEFEAVVGRCKNEEELVNRGMQLVADFELSALLVTRSEQGMTLLQLGKPPLHLPTQAKEVFDVTGAGDTVIGVLAAALAAGNSLEESCFLANAAAGVVVGKLGTSTVSPIELENAIRGRAETGFGVMDEQQLKIAVAQARQRGEKVVMTNGIFDILHAGHVSYLANARKLGDRLIVAVNSDASTKRLKGEKRPVNPLEQRMVVLGALEAVDWVVPFEEDTPQRLIADILPDLLVKGGDYKPHEIAGSEEVWAAGGEVKVLNFEDGVSTTNIIQSIKNGRG.

The tract at residues 1 to 318 is ribokinase; it reads MKVTLPDFRR…ENAIRGRAET (318 aa). Residue 195–198 coordinates ATP; that stretch reads NLSE. Asp264 is an active-site residue. The cytidylyltransferase stretch occupies residues 344–476; the sequence is MTNGIFDILH…IIQSIKNGRG (133 aa).

This sequence in the N-terminal section; belongs to the carbohydrate kinase PfkB family. It in the C-terminal section; belongs to the cytidylyltransferase family. As to quaternary structure, homodimer.

It carries out the reaction D-glycero-beta-D-manno-heptose 7-phosphate + ATP = D-glycero-beta-D-manno-heptose 1,7-bisphosphate + ADP + H(+). The catalysed reaction is D-glycero-beta-D-manno-heptose 1-phosphate + ATP + H(+) = ADP-D-glycero-beta-D-manno-heptose + diphosphate. The protein operates within nucleotide-sugar biosynthesis; ADP-L-glycero-beta-D-manno-heptose biosynthesis; ADP-L-glycero-beta-D-manno-heptose from D-glycero-beta-D-manno-heptose 7-phosphate: step 1/4. Its pathway is nucleotide-sugar biosynthesis; ADP-L-glycero-beta-D-manno-heptose biosynthesis; ADP-L-glycero-beta-D-manno-heptose from D-glycero-beta-D-manno-heptose 7-phosphate: step 3/4. Catalyzes the phosphorylation of D-glycero-D-manno-heptose 7-phosphate at the C-1 position to selectively form D-glycero-beta-D-manno-heptose-1,7-bisphosphate. Functionally, catalyzes the ADP transfer from ATP to D-glycero-beta-D-manno-heptose 1-phosphate, yielding ADP-D-glycero-beta-D-manno-heptose. This is Bifunctional protein HldE from Yersinia pseudotuberculosis serotype O:1b (strain IP 31758).